The following is a 103-amino-acid chain: Small ribosomal subunit protein uS10 (103 aa).

This sequence belongs to the universal ribosomal protein uS10 family. Part of the 30S ribosomal subunit.

Involved in the binding of tRNA to the ribosomes. This Rubrobacter xylanophilus (strain DSM 9941 / JCM 11954 / NBRC 16129 / PRD-1) protein is Small ribosomal subunit protein uS10.